The sequence spans 192 residues: MGRIYFATTNLKKLKEIRSLFEADIVHMNIPMVEIQASLERIVDHKLNQVVPCIGEGDAVIVDDTAVAFEGLYGFPGVYIKDFLRIGSRKISEIVGKIGNSNATAFCCLGIAHYRDGRVVKKVFFGELEGSIVESKEDGLEGFDYIFLPSGSSMCLGDMPVDEKNRISHRRIASKKLADYMASVGIIKAHGS.

8 to 13 provides a ligand contact to ITP; sequence TTNLKK. Glu34 provides a ligand contact to Mg(2+). Residues Lys46, 64 to 65, Lys81, 141 to 144, Lys164, and 169 to 170 each bind ITP; these read DT, EGFD, and HR.

This sequence belongs to the HAM1 NTPase family. As to quaternary structure, homodimer. Mg(2+) is required as a cofactor. It depends on Mn(2+) as a cofactor.

It localises to the cytoplasm. The protein resides in the nucleus. The catalysed reaction is ITP + H2O = IMP + diphosphate + H(+). The enzyme catalyses dITP + H2O = dIMP + diphosphate + H(+). It carries out the reaction XTP + H2O = XMP + diphosphate + H(+). Its function is as follows. Pyrophosphatase that hydrolyzes non-canonical purine nucleotides such as inosine triphosphate (ITP), deoxyinosine triphosphate (dITP) or xanthosine 5'-triphosphate (XTP) to their respective monophosphate derivatives. The enzyme does not distinguish between the deoxy- and ribose forms. Probably excludes non-canonical purines from RNA and DNA precursor pools, thus preventing their incorporation into RNA and DNA and avoiding chromosomal lesions. This chain is Inosine triphosphate pyrophosphatase, found in Encephalitozoon cuniculi (strain GB-M1) (Microsporidian parasite).